A 444-amino-acid polypeptide reads, in one-letter code: Tryptophan 5-hydroxylase 1 (444 aa).

The 76-residue stretch at 19–94 (TLIFSLKNEV…NVLSVTPPDN (76 aa)) folds into the ACT domain. S58 is subject to Phosphoserine; by PKA. Residues Y235, R257, and T265 each contribute to the L-tryptophan site. Positions 272, 277, and 317 each coordinate Fe cation. L-tryptophan is bound by residues S336 and I366.

This sequence belongs to the biopterin-dependent aromatic amino acid hydroxylase family. As to quaternary structure, homotetramer. Interacts with DNAJC12. Fe(2+) is required as a cofactor. Ubiquitinated, leading to its degradation by the proteasome. Ubiquitinated is triggered by phosphorylation. In terms of processing, phosphorylated; triggering degradation by the proteasome.

It catalyses the reaction (6R)-L-erythro-5,6,7,8-tetrahydrobiopterin + L-tryptophan + O2 = 5-hydroxy-L-tryptophan + (4aS,6R)-4a-hydroxy-L-erythro-5,6,7,8-tetrahydrobiopterin. Its pathway is aromatic compound metabolism; serotonin biosynthesis; serotonin from L-tryptophan: step 1/2. In terms of biological role, oxidizes L-tryptophan to 5-hydroxy-l-tryptophan in the rate-determining step of serotonin biosynthesis. The chain is Tryptophan 5-hydroxylase 1 (TPH1) from Oryctolagus cuniculus (Rabbit).